The sequence spans 256 residues: MSLAVRVIPCLDVDAGRVVKGVNFENLRDAGDPVELARRYNAAGADEITFLDVTASTSDRATTYDVVTRTAEEVFIPLTVGGGVRTVEDVDRLLRTGADKVSVNTAAVARPELITEITRRFGSQVLVLSLDARRTEDPGCASGYEVTTHGGRRGTGIDAVAWCREASERGVGEILLNSIDADGTREGFDLEMIRDVRAVTRVPLIASGGAGEPEHFPPAVAAGADAVLAASLFHFGPDDMLARVKDALRQAGHTVR.

Active-site residues include D12 and D131.

Belongs to the HisA/HisF family. Heterodimer of HisH and HisF.

It localises to the cytoplasm. The catalysed reaction is 5-[(5-phospho-1-deoxy-D-ribulos-1-ylimino)methylamino]-1-(5-phospho-beta-D-ribosyl)imidazole-4-carboxamide + L-glutamine = D-erythro-1-(imidazol-4-yl)glycerol 3-phosphate + 5-amino-1-(5-phospho-beta-D-ribosyl)imidazole-4-carboxamide + L-glutamate + H(+). The protein operates within amino-acid biosynthesis; L-histidine biosynthesis; L-histidine from 5-phospho-alpha-D-ribose 1-diphosphate: step 5/9. In terms of biological role, IGPS catalyzes the conversion of PRFAR and glutamine to IGP, AICAR and glutamate. The HisF subunit catalyzes the cyclization activity that produces IGP and AICAR from PRFAR using the ammonia provided by the HisH subunit. The polypeptide is Imidazole glycerol phosphate synthase subunit HisF (Micrococcus luteus (strain ATCC 4698 / DSM 20030 / JCM 1464 / CCM 169 / CCUG 5858 / IAM 1056 / NBRC 3333 / NCIMB 9278 / NCTC 2665 / VKM Ac-2230) (Micrococcus lysodeikticus)).